Consider the following 198-residue polypeptide: Twist-related protein 1 (198 aa).

Positions 1-18 (MMQDVSSSPVSPADDSLS) are enriched in low complexity. A disordered region spans residues 1 to 101 (MMQDVSSSPV…GGGSPQSYEE (101 aa)). Over residues 34–43 (RGGRKRRSSR) the composition is skewed to basic residues. 2 stretches are compositionally biased toward gly residues: residues 46–64 (AGGGAGPGGAAGGVGGGDE) and 79–95 (GCGGGAGGGGSSSGGGS). Residues 104 to 155 (TQRVMANVRERQRTQSLNEAFAALRKIIPTLPSDKLSKIQTLKLAARYIDFL) enclose the bHLH domain. Residues 157 to 187 (QVLQSDELDSKMASCSYVAHERLSYAFSVWR) form a sufficient for transactivation activity region.

In terms of assembly, efficient DNA binding requires dimerization with another bHLH protein. Homodimer or heterodimer with E proteins such as TCF3. ID1 binds preferentially to TCF3 but does not interact efficiently with TWIST1 so ID1 levels control the amount of TCF3 available to dimerize with TWIST and thus determine the type of dimer formed.

It localises to the nucleus. Acts as a transcriptional regulator. Inhibits myogenesis by sequestrating E proteins, inhibiting trans-activation by MEF2, and inhibiting DNA-binding by MYOD1 through physical interaction. This interaction probably involves the basic domains of both proteins. Also represses expression of pro-inflammatory cytokines such as TNFA and IL1B. Regulates cranial suture patterning and fusion. Activates transcription as a heterodimer with E proteins. Regulates gene expression differentially, depending on dimer composition. Homodimers induce expression of FGFR2 and POSTN while heterodimers repress FGFR2 and POSTN expression and induce THBS1 expression. Heterodimerization is also required for osteoblast differentiation. Represses the activity of the circadian transcriptional activator: NPAS2-BMAL1 heterodimer. The sequence is that of Twist-related protein 1 (TWIST1) from Eulemur fulvus fulvus (Brown lemur).